We begin with the raw amino-acid sequence, 231 residues long: Ureidoacrylate amidohydrolase RutB (231 aa).

The active-site Proton acceptor is Asp-25. Lys-134 is a catalytic residue. The active-site Nucleophile is the Cys-167.

It belongs to the isochorismatase family. RutB subfamily.

The catalysed reaction is (Z)-3-ureidoacrylate + H2O + H(+) = (Z)-3-aminoacrylate + NH4(+) + CO2. It carries out the reaction (Z)-3-ureidoacrylate + H2O = (Z)-3-aminoacrylate + carbamate + H(+). The enzyme catalyses (Z)-2-methylureidoacrylate + H2O + H(+) = (Z)-2-methylaminoacrylate + NH4(+) + CO2. Functionally, hydrolyzes ureidoacrylate to form aminoacrylate and carbamate. The carbamate hydrolyzes spontaneously, thereby releasing one of the nitrogen atoms of the pyrimidine ring as ammonia and one of its carbon atoms as CO2. This chain is Ureidoacrylate amidohydrolase RutB, found in Escherichia coli O18:K1:H7 (strain IHE3034 / ExPEC).